Consider the following 329-residue polypeptide: Ketol-acid reductoisomerase (NADP(+)) (329 aa).

The 180-residue stretch at 2-181 folds into the KARI N-terminal Rossmann domain; that stretch reads VQKYYESDAD…GATRAVVFET (180 aa). Residues 25-28, R48, S52, and 82-85 contribute to the NADP(+) site; these read YGSQ and DENQ. The active site involves H107. Position 133 (G133) interacts with NADP(+). In terms of domain architecture, KARI C-terminal knotted spans 182 to 327; the sequence is TFAEETETDL…AEIRGFMPQF (146 aa). The Mg(2+) site is built by D190, E194, E226, and E230. S251 provides a ligand contact to substrate.

Belongs to the ketol-acid reductoisomerase family. Mg(2+) is required as a cofactor.

It catalyses the reaction (2R)-2,3-dihydroxy-3-methylbutanoate + NADP(+) = (2S)-2-acetolactate + NADPH + H(+). It carries out the reaction (2R,3R)-2,3-dihydroxy-3-methylpentanoate + NADP(+) = (S)-2-ethyl-2-hydroxy-3-oxobutanoate + NADPH + H(+). The protein operates within amino-acid biosynthesis; L-isoleucine biosynthesis; L-isoleucine from 2-oxobutanoate: step 2/4. Its pathway is amino-acid biosynthesis; L-valine biosynthesis; L-valine from pyruvate: step 2/4. Functionally, involved in the biosynthesis of branched-chain amino acids (BCAA). Catalyzes an alkyl-migration followed by a ketol-acid reduction of (S)-2-acetolactate (S2AL) to yield (R)-2,3-dihydroxy-isovalerate. In the isomerase reaction, S2AL is rearranged via a Mg-dependent methyl migration to produce 3-hydroxy-3-methyl-2-ketobutyrate (HMKB). In the reductase reaction, this 2-ketoacid undergoes a metal-dependent reduction by NADPH to yield (R)-2,3-dihydroxy-isovalerate. The protein is Ketol-acid reductoisomerase (NADP(+)) of Methanoculleus marisnigri (strain ATCC 35101 / DSM 1498 / JR1).